The following is a 584-amino-acid chain: Probable DNA ligase (584 aa).

Residue glutamate 248 coordinates ATP. Lysine 250 (N6-AMP-lysine intermediate) is an active-site residue. ATP is bound by residues arginine 255, arginine 270, glutamate 299, phenylalanine 339, arginine 416, and lysine 422.

The protein belongs to the ATP-dependent DNA ligase family. Mg(2+) is required as a cofactor.

It catalyses the reaction ATP + (deoxyribonucleotide)n-3'-hydroxyl + 5'-phospho-(deoxyribonucleotide)m = (deoxyribonucleotide)n+m + AMP + diphosphate.. Functionally, DNA ligase that seals nicks in double-stranded DNA during DNA replication, DNA recombination and DNA repair. This Aquifex aeolicus (strain VF5) protein is Probable DNA ligase.